The chain runs to 390 residues: NADH-quinone oxidoreductase subunit D (390 aa).

This sequence belongs to the complex I 49 kDa subunit family. As to quaternary structure, NDH-1 is composed of 14 different subunits. Subunits NuoB, C, D, E, F, and G constitute the peripheral sector of the complex.

The protein resides in the cell inner membrane. The catalysed reaction is a quinone + NADH + 5 H(+)(in) = a quinol + NAD(+) + 4 H(+)(out). Functionally, NDH-1 shuttles electrons from NADH, via FMN and iron-sulfur (Fe-S) centers, to quinones in the respiratory chain. The immediate electron acceptor for the enzyme in this species is believed to be ubiquinone. Couples the redox reaction to proton translocation (for every two electrons transferred, four hydrogen ions are translocated across the cytoplasmic membrane), and thus conserves the redox energy in a proton gradient. This chain is NADH-quinone oxidoreductase subunit D, found in Geobacter sulfurreducens (strain ATCC 51573 / DSM 12127 / PCA).